The primary structure comprises 345 residues: Phosphoribosylformylglycinamidine cyclo-ligase (345 aa).

This sequence belongs to the AIR synthase family.

It localises to the cytoplasm. The enzyme catalyses 2-formamido-N(1)-(5-O-phospho-beta-D-ribosyl)acetamidine + ATP = 5-amino-1-(5-phospho-beta-D-ribosyl)imidazole + ADP + phosphate + H(+). It functions in the pathway purine metabolism; IMP biosynthesis via de novo pathway; 5-amino-1-(5-phospho-D-ribosyl)imidazole from N(2)-formyl-N(1)-(5-phospho-D-ribosyl)glycinamide: step 2/2. This Cronobacter sakazakii (strain ATCC BAA-894) (Enterobacter sakazakii) protein is Phosphoribosylformylglycinamidine cyclo-ligase.